A 213-amino-acid chain; its full sequence is Orotate phosphoribosyltransferase (213 aa).

K26 contacts 5-phospho-alpha-D-ribose 1-diphosphate. 34 to 35 contributes to the orotate binding site; that stretch reads FF. 5-phospho-alpha-D-ribose 1-diphosphate-binding positions include 72-73, R99, K100, K103, H105, and 124-132; these read YK and DDVITAGTA. Orotate-binding residues include T128 and R156.

Belongs to the purine/pyrimidine phosphoribosyltransferase family. PyrE subfamily. In terms of assembly, homodimer. Mg(2+) is required as a cofactor.

The catalysed reaction is orotidine 5'-phosphate + diphosphate = orotate + 5-phospho-alpha-D-ribose 1-diphosphate. Its pathway is pyrimidine metabolism; UMP biosynthesis via de novo pathway; UMP from orotate: step 1/2. Functionally, catalyzes the transfer of a ribosyl phosphate group from 5-phosphoribose 1-diphosphate to orotate, leading to the formation of orotidine monophosphate (OMP). The protein is Orotate phosphoribosyltransferase of Pseudomonas putida (strain W619).